We begin with the raw amino-acid sequence, 71 residues long: MVVNRALLASVDALSRDEQIELVEHINGNLAEGMHISEANQALIEARANDTDDAHWSTIDDFDKRIRARLG.

Its function is as follows. Antitoxin component of a type II toxin-antitoxin (TA) system. In Mycobacterium tuberculosis (strain CDC 1551 / Oshkosh), this protein is Antitoxin ParD2 (parD2).